We begin with the raw amino-acid sequence, 60 residues long: Cecropin-B (60 aa).

An N-terminal signal peptide occupies residues 1–25; sequence MNFTKLFILVAIAVLVVVGVQPVDG. Residue Leu-59 is modified to Leucine amide.

This sequence belongs to the cecropin family.

The protein localises to the secreted. In terms of biological role, cecropins have lytic and antibacterial activity against several Gram-positive and Gram-negative bacteria. The chain is Cecropin-B (CecB) from Anopheles gambiae (African malaria mosquito).